We begin with the raw amino-acid sequence, 99 residues long: Imizoquin biosynthesis cluster protein A (99 aa).

It functions in the pathway secondary metabolite biosynthesis. Part of the gene cluster that mediates the biosynthesis of imizoquins A to D, tripeptide-derived alkaloids that serve a protective role against oxidative stress that are essential for normal germination. ImqB is a canonical three-module NRPS that assembles the tripeptide backbone of the imizoquins via condensation of Trp, Tyr, and Leu-derived precursors. N-methylation by imqF and phenol oxidation by imqC, followed by cyclization via the FAD-dependent oxidase imqH carry out the three-step transformation of L-tyrosine into tetrahydroisoquinoline. Importantly, this sequence requires the presence of a free amine in the tyrosine moiety, indicating that isoquinoline formation occurs prior to peptide bond formation. The imidazolidin-4-one ring of imizoquins could form following additional oxidation of the methyl-derived bridgehead carbon by imqH. Lastly, O-methylation by imqG and leucine hydroxylation by imqE complete biosynthesis of the imizoquins. This chain is Imizoquin biosynthesis cluster protein A, found in Aspergillus flavus (strain ATCC 200026 / FGSC A1120 / IAM 13836 / NRRL 3357 / JCM 12722 / SRRC 167).